We begin with the raw amino-acid sequence, 211 residues long: Large ribosomal subunit protein bL25 (211 aa).

This sequence belongs to the bacterial ribosomal protein bL25 family. CTC subfamily. In terms of assembly, part of the 50S ribosomal subunit; part of the 5S rRNA/L5/L18/L25 subcomplex. Contacts the 5S rRNA. Binds to the 5S rRNA independently of L5 and L18.

Its function is as follows. This is one of the proteins that binds to the 5S RNA in the ribosome where it forms part of the central protuberance. This Xanthomonas axonopodis pv. citri (strain 306) protein is Large ribosomal subunit protein bL25.